The sequence spans 823 residues: Pentatricopeptide repeat-containing protein At4g33990 (823 aa).

PPR repeat units lie at residues 85–115 (NVCISAKLVNLYCYLGNVALARHTFDHIQNR), 116–151 (DVYAWNLMISGYGRAGNSSEVIRCFSLFMLSSGLTP), 152–183 (DYRTFPSVLKACRTVIDGNKIHCLALKFGFMW), 184–214 (DVYVAASLIHLYSRYKAVGNARILFDEMPVR), 215–249 (DMGSWNAMISGYCQSGNAKEALTLSNGLRAMDSVT), 252–280 (SLLSACTEAGDFNRGVTIHSYSIKHGLES), 281–311 (ELFVSNKLIDLYAEFGRLRDCQKVFDRMYVR), 312–346 (DLISWNSIIKAYELNEQPLRAISLFQEMRLSRIQP), 347–381 (DCLTLISLASILSQLGDIRACRSVQGFTLRKGWFL), 383–413 (DITIGNAVVVMYAKLGLVDSARAVFNWLPNT), 414–448 (DVISWNTIISGYAQNGFASEAIEMYNIMEEEGEIA), 450–484 (NQGTWVSVLPACSQAGALRQGMKLHGRLLKNGLYL), 485–515 (DVFVVTSLADMYGKCGRLEDALSLFYQIPRV), 516–550 (NSVPWNTLIACHGFHGHGEKAVMLFKEMLDEGVKP), 551–581 (DHITFVTLLSACSHSGLVDEGQWCFEMMQTD), and 587–617 (SLKHYGCMVDMYGRAGQLETALKFIKSMSLQ). The interval 622-697 (IWGALLSACR…TPGWSSMEVD (76 aa)) is type E motif. The interval 698–728 (NKVEVFYTGNQTHPMYEEMYRELTALQAKLK) is type E(+) motif. The segment at 729–823 (MIGYVPDHRF…NGVCSCGDYW (95 aa)) is type DYW motif.

The protein belongs to the PPR family. PCMP-H subfamily.

This Arabidopsis thaliana (Mouse-ear cress) protein is Pentatricopeptide repeat-containing protein At4g33990 (EMB2758).